Consider the following 309-residue polypeptide: Porphobilinogen deaminase (309 aa).

An S-(dipyrrolylmethanemethyl)cysteine modification is found at Cys240.

Belongs to the HMBS family. Monomer. The cofactor is dipyrromethane.

The catalysed reaction is 4 porphobilinogen + H2O = hydroxymethylbilane + 4 NH4(+). Its pathway is porphyrin-containing compound metabolism; protoporphyrin-IX biosynthesis; coproporphyrinogen-III from 5-aminolevulinate: step 2/4. Its function is as follows. Tetrapolymerization of the monopyrrole PBG into the hydroxymethylbilane pre-uroporphyrinogen in several discrete steps. This is Porphobilinogen deaminase from Brevibacillus brevis (strain 47 / JCM 6285 / NBRC 100599).